Here is a 152-residue protein sequence, read N- to C-terminus: Small ribosomal subunit protein uS5 (152 aa).

In terms of domain architecture, S5 DRBM spans 14-77; it reads FEEVIVNIGR…DDAHKNLVKV (64 aa).

The protein belongs to the universal ribosomal protein uS5 family. Part of the 30S ribosomal subunit. Contacts proteins S4 and S8.

Functionally, with S4 and S12 plays an important role in translational accuracy. In terms of biological role, located at the back of the 30S subunit body where it stabilizes the conformation of the head with respect to the body. The protein is Small ribosomal subunit protein uS5 of Sulfurovum sp. (strain NBC37-1).